A 659-amino-acid polypeptide reads, in one-letter code: Probable acyl-coenzyme A oxidase acox-1.5 (659 aa).

Residues 148-151 (YAQT), 156-157 (GT), and Gly190 contribute to the FAD site. Residues 284–287 (KVGY) and Arg294 each bind substrate. Residues Arg319 and 339–342 (QQYR) each bind FAD. Positions 395 and 403 each coordinate ATP. An FAD-binding site is contributed by Gly410. A substrate-binding site is contributed by 432–433 (YE). The active-site Proton acceptor is Glu433. Glu435 contacts FAD. Position 524–527 (524–527 (KAAR)) interacts with ATP. Positions 657–659 (SKL) match the Microbody targeting signal motif.

The protein belongs to the acyl-CoA oxidase family. Homodimer. FAD is required as a cofactor.

The protein resides in the peroxisome. The protein operates within lipid metabolism; peroxisomal fatty acid beta-oxidation. Activated by ATP. ATP binding leads to a conformational change that promotes FAD cofactor binding and enzyme activity. ATP binding likely occurs during acox-1.5 folding and/or dimer formation. Functionally, involved in the first step of peroxisomal beta-oxidation by catalyzing the desaturation of fatty acid-derived side chains. The polypeptide is Probable acyl-coenzyme A oxidase acox-1.5 (Caenorhabditis elegans).